The following is a 283-amino-acid chain: Shikimate dehydrogenase (NADP(+)) (283 aa).

Shikimate-binding positions include 16–18 and Thr63; that span reads SLS. Catalysis depends on Lys67, which acts as the Proton acceptor. Asp79 is an NADP(+) binding site. Residues Asn88 and Asp103 each coordinate shikimate. NADP(+) contacts are provided by residues 128–132 and Gly243; that span reads GAGGA.

Belongs to the shikimate dehydrogenase family. As to quaternary structure, homodimer.

The enzyme catalyses shikimate + NADP(+) = 3-dehydroshikimate + NADPH + H(+). It participates in metabolic intermediate biosynthesis; chorismate biosynthesis; chorismate from D-erythrose 4-phosphate and phosphoenolpyruvate: step 4/7. Involved in the biosynthesis of the chorismate, which leads to the biosynthesis of aromatic amino acids. Catalyzes the reversible NADPH linked reduction of 3-dehydroshikimate (DHSA) to yield shikimate (SA). The protein is Shikimate dehydrogenase (NADP(+)) of Xanthomonas euvesicatoria pv. vesicatoria (strain 85-10) (Xanthomonas campestris pv. vesicatoria).